Consider the following 361-residue polypeptide: Nicotinate-nucleotide--dimethylbenzimidazole phosphoribosyltransferase (361 aa).

The active-site Proton acceptor is E320.

The protein belongs to the CobT family. In terms of assembly, homodimer.

The catalysed reaction is 5,6-dimethylbenzimidazole + nicotinate beta-D-ribonucleotide = alpha-ribazole 5'-phosphate + nicotinate + H(+). It participates in nucleoside biosynthesis; alpha-ribazole biosynthesis; alpha-ribazole from 5,6-dimethylbenzimidazole: step 1/2. Functionally, catalyzes the synthesis of alpha-ribazole-5'-phosphate from nicotinate mononucleotide (NAMN) and 5,6-dimethylbenzimidazole (DMB). This Shigella boydii serotype 18 (strain CDC 3083-94 / BS512) protein is Nicotinate-nucleotide--dimethylbenzimidazole phosphoribosyltransferase.